The primary structure comprises 186 residues: Acireductone dioxygenase (186 aa).

The tract at residues 1–21 (MSRLSIFPDGSTSMDQSSPTP) is disordered. The segment covering 10–20 (GSTSMDQSSPT) has biased composition (polar residues). Positions 103, 105, 109, and 147 each coordinate Fe(2+). Residues histidine 103, histidine 105, glutamate 109, and histidine 147 each contribute to the Ni(2+) site.

It belongs to the acireductone dioxygenase (ARD) family. As to quaternary structure, monomer. It depends on Fe(2+) as a cofactor. The cofactor is Ni(2+).

The catalysed reaction is 1,2-dihydroxy-5-(methylsulfanyl)pent-1-en-3-one + O2 = 3-(methylsulfanyl)propanoate + CO + formate + 2 H(+). It catalyses the reaction 1,2-dihydroxy-5-(methylsulfanyl)pent-1-en-3-one + O2 = 4-methylsulfanyl-2-oxobutanoate + formate + 2 H(+). It functions in the pathway amino-acid biosynthesis; L-methionine biosynthesis via salvage pathway; L-methionine from S-methyl-5-thio-alpha-D-ribose 1-phosphate: step 5/6. Catalyzes 2 different reactions between oxygen and the acireductone 1,2-dihydroxy-3-keto-5-methylthiopentene (DHK-MTPene) depending upon the metal bound in the active site. Fe-containing acireductone dioxygenase (Fe-ARD) produces formate and 2-keto-4-methylthiobutyrate (KMTB), the alpha-ketoacid precursor of methionine in the methionine recycle pathway. Ni-containing acireductone dioxygenase (Ni-ARD) produces methylthiopropionate, carbon monoxide and formate, and does not lie on the methionine recycle pathway. In Synechococcus sp. (strain CC9902), this protein is Acireductone dioxygenase.